Consider the following 178-residue polypeptide: Gamma-crystallin S (178 aa).

The residue at position 2 (Ser2) is an N-acetylserine. The N-terminal arm stretch occupies residues 2 to 5; that stretch reads SKSV. Beta/gamma crystallin 'Greek key' domains are found at residues 6–44 and 45–87; these read AKIT…RVTG and GAWV…KVIH. A connecting peptide region spans residues 88–93; that stretch reads LSSGGQ. Beta/gamma crystallin 'Greek key' domains lie at 94–134 and 135–177; these read YKLQ…KVLD and GVWV…RRIM.

This sequence belongs to the beta/gamma-crystallin family. Monomer.

Its function is as follows. Crystallins are the dominant structural components of the vertebrate eye lens. The chain is Gamma-crystallin S (CRYGS) from Macropus fuliginosus (Western gray kangaroo).